Consider the following 129-residue polypeptide: uncharacterized protein (129 aa).

A helical transmembrane segment spans residues 33-50; that stretch reads MGGNVMWFIALLFALLIA.

It is found in the membrane. This is an uncharacterized protein from Saccharomyces cerevisiae (strain ATCC 204508 / S288c) (Baker's yeast).